We begin with the raw amino-acid sequence, 259 residues long: Proteasome subunit alpha (259 aa).

It belongs to the peptidase T1A family. In terms of assembly, the 20S proteasome core is composed of 14 alpha and 14 beta subunits that assemble into four stacked heptameric rings, resulting in a barrel-shaped structure. The two inner rings, each composed of seven catalytic beta subunits, are sandwiched by two outer rings, each composed of seven alpha subunits. The catalytic chamber with the active sites is on the inside of the barrel. Has a gated structure, the ends of the cylinder being occluded by the N-termini of the alpha-subunits. Is capped at one or both ends by the proteasome regulatory ATPase, PAN.

It localises to the cytoplasm. With respect to regulation, the formation of the proteasomal ATPase PAN-20S proteasome complex, via the docking of the C-termini of PAN into the intersubunit pockets in the alpha-rings, triggers opening of the gate for substrate entry. Interconversion between the open-gate and close-gate conformations leads to a dynamic regulation of the 20S proteasome proteolysis activity. Functionally, component of the proteasome core, a large protease complex with broad specificity involved in protein degradation. This is Proteasome subunit alpha from Methanococcus maripaludis (strain C7 / ATCC BAA-1331).